A 286-amino-acid polypeptide reads, in one-letter code: Meteorin-like protein (286 aa).

Positions 1–21 (MLSPFLAYLLSVVLLCRIARS) are cleaved as a signal peptide. 5 cysteine pairs are disulfide-bonded: Cys-28/Cys-51, Cys-84/Cys-120, Cys-165/Cys-235, Cys-168/Cys-259, and Cys-178/Cys-281.

It belongs to the meteorin family.

The protein localises to the secreted. In terms of biological role, hormone induced following exercise or cold exposure that promotes energy expenditure. Induced either in the skeletal muscle after exercise or in adipose tissue following cold exposure and is present in the circulation. Able to stimulate energy expenditure associated with the browning of the white fat depots and improves glucose tolerance. In Danio rerio (Zebrafish), this protein is Meteorin-like protein (metrnl).